The sequence spans 171 residues: Histone H1, gonadal (171 aa).

2 disordered regions span residues alanine 1–proline 40 and alanine 133–proline 171. The segment covering alanine 9–serine 35 has biased composition (basic residues). Residues alanine 37 to alanine 111 form the H15 domain.

Belongs to the histone H1/H5 family. As to expression, sperm.

Its subcellular location is the nucleus. It localises to the chromosome. Histones H1 are necessary for the condensation of nucleosome chains into higher-order structures. The polypeptide is Histone H1, gonadal (Echinolampas crassa (Sea urchin)).